The sequence spans 196 residues: MTKKDEKGSNLDIPVSRLAESYKEKVVPALMERFQYKNIMMVPKLTKISINIGVGEAASEPKLLETAMQELAQITGQKPQIRKARKAISNFKLREGQPIGCRVTLRKKYMYEFLDRFVTLAVPRIRDFRGLSNTSFDGRGNYTLGIREQIIFPEIDIDKVPRIQGMDISFVTTARTDEEAFALLSELGMPFKKKNN.

Belongs to the universal ribosomal protein uL5 family. In terms of assembly, part of the 50S ribosomal subunit; part of the 5S rRNA/L5/L18/L25 subcomplex. Contacts the 5S rRNA and the P site tRNA. Forms a bridge to the 30S subunit in the 70S ribosome.

This is one of the proteins that bind and probably mediate the attachment of the 5S RNA into the large ribosomal subunit, where it forms part of the central protuberance. In the 70S ribosome it contacts protein S13 of the 30S subunit (bridge B1b), connecting the 2 subunits; this bridge is implicated in subunit movement. Contacts the P site tRNA; the 5S rRNA and some of its associated proteins might help stabilize positioning of ribosome-bound tRNAs. The chain is Large ribosomal subunit protein uL5 from Prosthecochloris aestuarii (strain DSM 271 / SK 413).